We begin with the raw amino-acid sequence, 475 residues long: Lactate utilization protein B (475 aa).

4Fe-4S ferredoxin-type domains follow at residues glycine 304–tyrosine 334 and tyrosine 353–leucine 382. Cysteine 313, cysteine 316, cysteine 319, cysteine 323, cysteine 366, cysteine 369, and cysteine 373 together coordinate [4Fe-4S] cluster.

Belongs to the LutB/YkgF family.

Its function is as follows. Is involved in L-lactate degradation and allows cells to grow with lactate as the sole carbon source. Has probably a role as an electron transporter during oxidation of L-lactate. This chain is Lactate utilization protein B, found in Shouchella clausii (strain KSM-K16) (Alkalihalobacillus clausii).